We begin with the raw amino-acid sequence, 436 residues long: Probable protein phosphatase 2C 15 (436 aa).

The PPM-type phosphatase domain occupies 30–302; that stretch reads KAAKMEKPIV…DDTTCIVVDI (273 aa). Mn(2+) is bound by residues Asp-78, Gly-79, Asp-254, and Asp-293.

Belongs to the PP2C family. It depends on Mg(2+) as a cofactor. The cofactor is Mn(2+).

The enzyme catalyses O-phospho-L-seryl-[protein] + H2O = L-seryl-[protein] + phosphate. The catalysed reaction is O-phospho-L-threonyl-[protein] + H2O = L-threonyl-[protein] + phosphate. This chain is Probable protein phosphatase 2C 15, found in Arabidopsis thaliana (Mouse-ear cress).